The following is a 200-amino-acid chain: Inner membrane-spanning protein YciB (200 aa).

Transmembrane regions (helical) follow at residues 32–52, 56–76, 93–113, 126–146, and 153–173; these read FVAT…SYVV, VPLM…LTLV, LFAV…AILF, FLTI…EVIW, and FWVA…AMTQ.

It belongs to the YciB family.

It localises to the cell inner membrane. Functionally, plays a role in cell envelope biogenesis, maintenance of cell envelope integrity and membrane homeostasis. This is Inner membrane-spanning protein YciB from Afipia carboxidovorans (strain ATCC 49405 / DSM 1227 / KCTC 32145 / OM5) (Oligotropha carboxidovorans).